Here is a 91-residue protein sequence, read N- to C-terminus: Small ribosomal subunit protein bS6 (91 aa).

This sequence belongs to the bacterial ribosomal protein bS6 family.

Functionally, binds together with bS18 to 16S ribosomal RNA. The chain is Small ribosomal subunit protein bS6 from Leptospira borgpetersenii serovar Hardjo-bovis (strain JB197).